Reading from the N-terminus, the 149-residue chain is Large ribosomal subunit protein uL15 (149 aa).

The interval 1–58 (MKLHNLRPAKGGEVKARKRVGRGYGSGLGHNAGRGRDGQNSRSGGGVRPGFEGGQMPL) is disordered. Composition is skewed to gly residues over residues 22 to 32 (RGYGSGLGHNA) and 43 to 53 (SGGGVRPGFEG).

This sequence belongs to the universal ribosomal protein uL15 family. Part of the 50S ribosomal subunit.

Binds to the 23S rRNA. This Finegoldia magna (strain ATCC 29328 / DSM 20472 / WAL 2508) (Peptostreptococcus magnus) protein is Large ribosomal subunit protein uL15.